A 303-amino-acid polypeptide reads, in one-letter code: Pyridoxal 5'-phosphate synthase subunit PdxS (303 aa).

D33 lines the D-ribose 5-phosphate pocket. K90 (schiff-base intermediate with D-ribose 5-phosphate) is an active-site residue. G162 contacts D-ribose 5-phosphate. Position 174 (R174) interacts with D-glyceraldehyde 3-phosphate. D-ribose 5-phosphate is bound by residues G223 and 244–245; that span reads GS.

The protein belongs to the PdxS/SNZ family. In the presence of PdxT, forms a dodecamer of heterodimers.

It catalyses the reaction aldehydo-D-ribose 5-phosphate + D-glyceraldehyde 3-phosphate + L-glutamine = pyridoxal 5'-phosphate + L-glutamate + phosphate + 3 H2O + H(+). It participates in cofactor biosynthesis; pyridoxal 5'-phosphate biosynthesis. In terms of biological role, catalyzes the formation of pyridoxal 5'-phosphate from ribose 5-phosphate (RBP), glyceraldehyde 3-phosphate (G3P) and ammonia. The ammonia is provided by the PdxT subunit. Can also use ribulose 5-phosphate and dihydroxyacetone phosphate as substrates, resulting from enzyme-catalyzed isomerization of RBP and G3P, respectively. The protein is Pyridoxal 5'-phosphate synthase subunit PdxS of Mycobacterium avium (strain 104).